We begin with the raw amino-acid sequence, 866 residues long: DNA replication licensing factor MCM4 (866 aa).

Disordered regions lie at residues 1–67 (MSSP…TSPA), 81–107 (SPLNYGTPSSMGSIRTPRSGIRGTPLR), and 124–145 (GGGSGLEPIPEKGSETTDPVSE). Composition is skewed to polar residues over residues 47–63 (DNISLPPTSPGNISLPA) and 81–93 (SPLNYGTPSSMGS). A phosphoserine mark is found at S55 and S81. T87 is subject to Phosphothreonine. Positions 460-669 (IYDRLARAIA…FDKRLASHLV (210 aa)) constitute an MCM domain. Position 512–519 (512–519 (GDPGTSKS)) interacts with ATP. An Arginine finger motif is present at residues 644–647 (SRFD).

This sequence belongs to the MCM family. In terms of assembly, component of the Mcm2-7 complex. The complex forms a toroidal hexameric ring with the proposed subunit order Mcm2-Mcm6-Mcm4-Mcm7-Mcm3-Mcm5. Phosphorylated by the catalytic component of the Dbf4-dependent kinase (DDK) complex Cdc7.

It is found in the nucleus. The catalysed reaction is ATP + H2O = ADP + phosphate + H(+). In terms of biological role, acts as a component of the Mcm2-7 complex (Mcm complex) which is the putative replicative helicase essential for 'once per cell cycle' DNA replication initiation and elongation in eukaryotic cells. The active ATPase sites in the Mcm2-7 ring are formed through the interaction surfaces of two neighboring subunits such that a critical structure of a conserved arginine finger motif is provided in trans relative to the ATP-binding site of the Walker A box of the adjacent subunit. The six ATPase active sites, however, are likely to contribute differentially to the complex helicase activity. Required for DNA replication and cell proliferation. Essential role in mitotic DNA replication but not in endoreplication. The chain is DNA replication licensing factor MCM4 (dpa) from Drosophila melanogaster (Fruit fly).